Consider the following 442-residue polypeptide: Endothelin receptor type B (442 aa).

Residues 1-26 (MQSSASRCGRALVALLLACGLLGVWG) form the signal peptide. Over 27 to 101 (EKRGFPPAQA…RKIEINKTFK (75 aa)) the chain is Extracellular. Asparagine 60 and asparagine 97 each carry an N-linked (GlcNAc...) asparagine glycan. Residues 102–126 (YINTIVSCLVFVLGIIGNSTLLRII) traverse the membrane as a helical segment. The Cytoplasmic portion of the chain corresponds to 127 to 137 (YKNKCMRNGPN). A helical membrane pass occupies residues 138 to 163 (ILIASLALGDLLHIIIDIPINAYKLL). Residues 164 to 175 (AGDWPFGAEMCK) are Extracellular-facing. Cysteines 174 and 255 form a disulfide. The helical transmembrane segment at 176–197 (LVPFIQKASVGITVLSLCALSI) threads the bilayer. At 198-218 (DRYRAVASWSRIKGIGVPKWT) the chain is on the cytoplasmic side. Residues 219-243 (AVEIVLIWVVSVVLAVPEAIGFDVI) traverse the membrane as a helical segment. The Extracellular portion of the chain corresponds to 244–271 (TSDYKGKPLRVCMLNPFQKTAFMQFYKT). A helical membrane pass occupies residues 272–296 (AKDWWLFSFYFCLPLAITAIFYTLM). The Cytoplasmic portion of the chain corresponds to 297–324 (TCEMLRKKSGMQIALNDHLKQRREVAKT). Residue serine 305 is modified to Phosphoserine. A helical membrane pass occupies residues 325 to 350 (VFCLVLVFALCWLPLHLSRILKLTLY). Residues 351 to 362 (DQSNPQRCELLS) are Extracellular-facing. Residues 363–389 (FLLVLDYIGINMASLNSCINPIALYLV) traverse the membrane as a helical segment. The Cytoplasmic segment spans residues 390-442 (SKRFKNCFKSCLCCWCQTFEEKQSLEEKQSCLKFKANDHGYDNFRSSNKYSSS). Residues cysteine 402, cysteine 403, and cysteine 405 are each lipidated (S-palmitoyl cysteine). Position 419 is a phosphoserine (serine 419). Phosphotyrosine is present on tyrosine 439. Phosphoserine occurs at positions 440, 441, and 442.

Belongs to the G-protein coupled receptor 1 family. Endothelin receptor subfamily. EDNRB sub-subfamily. As to expression, widely distributed in cell types of a variety of tissues.

Its subcellular location is the cell membrane. In terms of biological role, non-specific receptor for endothelin 1, 2, and 3. Mediates its action by association with G proteins that activate a phosphatidylinositol-calcium second messenger system. The polypeptide is Endothelin receptor type B (Rattus norvegicus (Rat)).